Consider the following 75-residue polypeptide: Large ribosomal subunit protein bL31 (75 aa).

Residues cysteine 16, cysteine 18, cysteine 37, and cysteine 40 each coordinate Zn(2+).

This sequence belongs to the bacterial ribosomal protein bL31 family. Type A subfamily. In terms of assembly, part of the 50S ribosomal subunit. Zn(2+) serves as cofactor.

Its function is as follows. Binds the 23S rRNA. The sequence is that of Large ribosomal subunit protein bL31 from Legionella pneumophila (strain Paris).